Here is a 176-residue protein sequence, read N- to C-terminus: Protein FimF (176 aa).

The N-terminal stretch at 1-20 (MRNKPFYLLCAFLWLAVSHA) is a signal peptide. Cys-38 and Cys-78 are joined by a disulfide.

Belongs to the fimbrial protein family.

It localises to the fimbrium. Involved in regulation of length and mediation of adhesion of type 1 fimbriae (but not necessary for the production of fimbriae). Involved in the integration of FimH in the fimbriae. This Escherichia coli (strain K12) protein is Protein FimF (fimF).